Reading from the N-terminus, the 263-residue chain is Probable ribosomal RNA small subunit methyltransferase A (263 aa).

Positions 12, 37, 58, 83, and 100 each coordinate S-adenosyl-L-methionine.

It belongs to the class I-like SAM-binding methyltransferase superfamily. rRNA adenine N(6)-methyltransferase family. RsmA subfamily.

It is found in the cytoplasm. Its function is as follows. Specifically dimethylates two adjacent adenosines in the loop of a conserved hairpin near the 3'-end of 16S rRNA in the 30S particle. May play a critical role in biogenesis of 30S subunits. In Methanococcus maripaludis (strain C6 / ATCC BAA-1332), this protein is Probable ribosomal RNA small subunit methyltransferase A.